A 289-amino-acid polypeptide reads, in one-letter code: Eukaryotic translation initiation factor 3 subunit G (289 aa).

2 disordered regions span residues 1 to 31 and 151 to 199; these read MSRL…VISN and DTMA…GEKM. The region spanning 209–287 is the RRM domain; that stretch reads ATLRVTNVSE…LILRVEFAKK (79 aa).

The protein belongs to the eIF-3 subunit G family. As to quaternary structure, component of the eukaryotic translation initiation factor 3 (eIF-3) complex.

The protein resides in the cytoplasm. Functionally, RNA-binding component of the eukaryotic translation initiation factor 3 (eIF-3) complex, which is involved in protein synthesis of a specialized repertoire of mRNAs and, together with other initiation factors, stimulates binding of mRNA and methionyl-tRNAi to the 40S ribosome. The eIF-3 complex specifically targets and initiates translation of a subset of mRNAs involved in cell proliferation. This subunit can bind 18S rRNA. This chain is Eukaryotic translation initiation factor 3 subunit G, found in Coccidioides immitis (strain RS) (Valley fever fungus).